The following is a 291-amino-acid chain: ATP synthase gamma chain (291 aa).

It belongs to the ATPase gamma chain family. As to quaternary structure, F-type ATPases have 2 components, CF(1) - the catalytic core - and CF(0) - the membrane proton channel. CF(1) has five subunits: alpha(3), beta(3), gamma(1), delta(1), epsilon(1). CF(0) has three main subunits: a, b and c.

The protein localises to the cell inner membrane. Functionally, produces ATP from ADP in the presence of a proton gradient across the membrane. The gamma chain is believed to be important in regulating ATPase activity and the flow of protons through the CF(0) complex. The sequence is that of ATP synthase gamma chain from Burkholderia multivorans (strain ATCC 17616 / 249).